Reading from the N-terminus, the 112-residue chain is Protein preY, mitochondrial (112 aa).

The transit peptide at 1-34 (MLTTTCRRLSQALQRPHALSAVAQRCLRAPGARS) directs the protein to the mitochondrion. The TRM112 domain maps to 49-95 (HPALLQFLVCPLSKKPLRYDASTNELINDELGIAYPIIDGVPNMIPQ).

This sequence belongs to the PREY family. Interacts (via TRM112 domain) with NDUFAF5; the interaction is direct and stabilizes NDUFAF5 protein. Interacts with COQ5; the interaction is direct, stabilizes COQ5 protein and associates PYURF with COQ enzyme complex.

It is found in the mitochondrion. Its function is as follows. In mitochondria, S-adenosylmethionine-dependent methyltransferase chaperone that supports both coenzyme Q biosynthesis, by stabilizing its components, such as COQ5, and NADH:ubiquinone oxidoreductase complex (complex I, MT-ND1) assembly, by stabilizing complex I assembly factors, such as NDUFAF5. The sequence is that of Protein preY, mitochondrial (Pyurf) from Rattus norvegicus (Rat).